A 226-amino-acid chain; its full sequence is DnaJ homolog subfamily C member 30, mitochondrial (226 aa).

A mitochondrion-targeting transit peptide spans 1-38; it reads MAAMRWRWWQRLLPWRLLQARGFPQNSAPSLGLGARTY. One can recognise a J domain in the interval 49 to 114; that stretch reads ALYDLLGVPS…TLRRKYDRGL (66 aa). The tract at residues 116-157 is disordered; the sequence is SDEDLRGPGVRPSRTPAPDPGSPRTPPPTSRTHDGSRASPGA. Over residues 130 to 144 the composition is skewed to pro residues; that stretch reads TPAPDPGSPRTPPPT. The helical transmembrane segment at 208–225 threads the bilayer; that stretch reads DTAAIFLIFSIFIIIGFY.

Associates with the ATP synthase complex. Interacts with MT-ATP6; interaction is direct. Interacts with ATP5MC2; interaction is direct. In terms of tissue distribution, expressed in brain, heart, kidney, liver, lung, spleen, stomach and testis. Highly expressed in the brain. In the neocortex, expressed in most, if not all, glutamatergic excitatory projection neurons (pyramidal) and many interneurons, with the strongest signal noticeably in large pyramidal neurons of layer 3C. Also present in pyramidal neurons of layer 3C PNs of the superior temporal cortex, as well as in pyramidal neurons (Betz cells) of the layer 5B primary motor cortex (at protein level).

It is found in the mitochondrion inner membrane. Functionally, mitochondrial protein enriched in neurons that acts as a regulator of mitochondrial respiration. Associates with the ATP synthase complex and facilitates ATP synthesis. May be a chaperone protein involved in the turnover of the subunits of mitochondrial complex I N-module. It facilitates the degradation of N-module subunits damaged by oxidative stress, and contributes to complex I functional efficiency. This chain is DnaJ homolog subfamily C member 30, mitochondrial, found in Homo sapiens (Human).